The chain runs to 471 residues: Ribulose bisphosphate carboxylase large chain (471 aa).

Position 5 is an N6,N6,N6-trimethyllysine (Lys5). Positions 114 and 164 each coordinate substrate. Catalysis depends on Lys166, which acts as the Proton acceptor. Lys168 contributes to the substrate binding site. Mg(2+) is bound by residues Lys192, Asp194, and Glu195. The residue at position 192 (Lys192) is an N6-carboxylysine. His285 (proton acceptor) is an active-site residue. Substrate contacts are provided by Arg286, His318, and Ser370.

It belongs to the RuBisCO large chain family. Type I subfamily. Heterohexadecamer of 8 large chains and 8 small chains; disulfide-linked. The disulfide link is formed within the large subunit homodimers. The cofactor is Mg(2+). Post-translationally, the disulfide bond which can form in the large chain dimeric partners within the hexadecamer appears to be associated with oxidative stress and protein turnover.

The protein localises to the plastid. Its subcellular location is the chloroplast. The catalysed reaction is 2 (2R)-3-phosphoglycerate + 2 H(+) = D-ribulose 1,5-bisphosphate + CO2 + H2O. It catalyses the reaction D-ribulose 1,5-bisphosphate + O2 = 2-phosphoglycolate + (2R)-3-phosphoglycerate + 2 H(+). Functionally, ruBisCO catalyzes two reactions: the carboxylation of D-ribulose 1,5-bisphosphate, the primary event in carbon dioxide fixation, as well as the oxidative fragmentation of the pentose substrate in the photorespiration process. Both reactions occur simultaneously and in competition at the same active site. The sequence is that of Ribulose bisphosphate carboxylase large chain from Schlumbergera truncata (Thanksgiving cactus).